The sequence spans 257 residues: tRNA (guanine-N(1)-)-methyltransferase (257 aa).

Residues glycine 113 and 133 to 138 each bind S-adenosyl-L-methionine; that span reads IGDYVL.

It belongs to the RNA methyltransferase TrmD family. As to quaternary structure, homodimer.

It localises to the cytoplasm. The catalysed reaction is guanosine(37) in tRNA + S-adenosyl-L-methionine = N(1)-methylguanosine(37) in tRNA + S-adenosyl-L-homocysteine + H(+). In terms of biological role, specifically methylates guanosine-37 in various tRNAs. This is tRNA (guanine-N(1)-)-methyltransferase from Cronobacter sakazakii (strain ATCC BAA-894) (Enterobacter sakazakii).